A 392-amino-acid chain; its full sequence is Monooxygenase AgnR1 (392 aa).

Residues 1–20 (MSAPQKCAAVVVGAGPAGLA) form the signal peptide. The N-linked (GlcNAc...) asparagine glycan is linked to Asn-134.

Monooxygenase; part of the gene cluster that mediates the biosynthesis of agnestins, dihydroxy-xanthone metabolites. The pathway begins with the assembly and cyclization of atrochrysone thioester by the non-reducing polyketide synthase Agnpks1. The atrochrysone carboxyl ACP thioesterase AgnL7 then breaks the thioester bond and releases the atrochrysone carboxylic acid as the first enzyme-free intermediate. The decarboxylase AgnL1 then catalyzes the concerted decarboxylation-elimination required to convert atochrysone carboxylic acid into emodin anthrone, which is further oxidized to emodin by the anthrone oxygenase AgnL2. Emodin then undergoes reduction catalyzed by the oxidoreductase AgnL4 to yield the dihydroquinone tautomer which is the substrate for reduction by the short chain dehydrogenase AgnL6 reduction to produce hydroxyketone, followed by AgnL8 dehydration and likely spontaneous autoxidation to chrysophanol. Baeyer-Villiger oxidation by the oxidase AgnL3 leads to monodictyphenone via cleavage of the C-10/C-10a bond of chrysophanol. Alternative cleavage at the C-4a/C-10 bond of chrysophanol also leads to the formation some cephalone F. Further conversion to agnestins A and B, requires reduction to dihydro-monodictyphenone, oxidation to agnestin C probably via an epoxide, and rearrangement to either agnestin A or agnestin B directly, although agnestin A or agnestin B can also interconvert. Within the cluster, AgnR1 is the only unassigned oxidoreductase present which could be involved in this conversion. However, AgnR1 seems not to be involved in this step, and thus genes involved in the proposed oxidation/reduction may be located elsewhere on the genome. Further agnestin A derivatives are probably formed by spontaneous decarboxylations, dehydrations and methanolysis reactions. This is Monooxygenase AgnR1 from Paecilomyces divaricatus (Penicillium divaricatum).